A 170-amino-acid polypeptide reads, in one-letter code: Probable T4-type lysozyme 2 (170 aa).

The Proton donor role is filled by Glu-13. The active-site Nucleophile is Asp-22.

The protein belongs to the glycosyl hydrolase 24 family.

The catalysed reaction is Hydrolysis of (1-&gt;4)-beta-linkages between N-acetylmuramic acid and N-acetyl-D-glucosamine residues in a peptidoglycan and between N-acetyl-D-glucosamine residues in chitodextrins.. This is Probable T4-type lysozyme 2 from Dictyostelium discoideum (Social amoeba).